The sequence spans 212 residues: Thymidylate kinase (212 aa).

Residue 11 to 18 coordinates ATP; that stretch reads GLEGAGKT.

This sequence belongs to the thymidylate kinase family.

It carries out the reaction dTMP + ATP = dTDP + ADP. Functionally, phosphorylation of dTMP to form dTDP in both de novo and salvage pathways of dTTP synthesis. In Buchnera aphidicola subsp. Schizaphis graminum (strain Sg), this protein is Thymidylate kinase.